The primary structure comprises 215 residues: MKYITIALAKGRLAKKALEILEQIGITCDEMKDPTSRKLIFTNEELKLRFFLAKANDVPTYVEYGAADIGVVGKDTILEEGRKMYEVLDLNLGKCRMCIAGPASAKELLHHGELIRVATKYPNIAKDYFYNKKHQTVEIIKLNGSIELAPIVGLSEVIVDIVETGSTLKENGLEVLEEICPLSARVVVNQVSMKMEHERITKMINDLREVLTEAQ.

This sequence belongs to the ATP phosphoribosyltransferase family. Short subfamily. As to quaternary structure, heteromultimer composed of HisG and HisZ subunits.

It localises to the cytoplasm. The enzyme catalyses 1-(5-phospho-beta-D-ribosyl)-ATP + diphosphate = 5-phospho-alpha-D-ribose 1-diphosphate + ATP. It participates in amino-acid biosynthesis; L-histidine biosynthesis; L-histidine from 5-phospho-alpha-D-ribose 1-diphosphate: step 1/9. In terms of biological role, catalyzes the condensation of ATP and 5-phosphoribose 1-diphosphate to form N'-(5'-phosphoribosyl)-ATP (PR-ATP). Has a crucial role in the pathway because the rate of histidine biosynthesis seems to be controlled primarily by regulation of HisG enzymatic activity. The protein is ATP phosphoribosyltransferase of Lachnoclostridium phytofermentans (strain ATCC 700394 / DSM 18823 / ISDg) (Clostridium phytofermentans).